The sequence spans 941 residues: MEESSSIAMLVQEIGEPEAVLTAEGVLSPSSEVDQQRKAKADPLVHVIQKLSKIVGHEKSQKCLLIGKKRPRPSETANSLEKLENCEIPAKATESPAAGVRKTEMSQASSTLASNDGKAMSYQCSLCKFLSPSFSVLKEHVKQHGQQHDVMLMCSECHATSRSQQELEAHVVSEHENSASSQARSSPSGQGATERKSETMVDIPVNMGSPQTHAVQSAAMAESGRRKWYAYEQYGMYRCLFCSYTCGQQRMLKTHAWKHAGEVNCSYPIFENENEPLGLLASSMSAAPGGVDAVVIAIGDSELSIHNGPSVQVQICSSDPPSSSPLEQSTEEGVHLNQAVTLDANEEEMLEVMSDSEENLFADSLLSSAQKIISSSPNKKGHVNVIVERLPSAEETLPPKHFLINAEMEEGKSPSPSEAQTGCVGAGNMYHADKCTVDIGGLIIGWSSAEKKDSELSKGLAPDENAPPGRRRTNSESLRLHSLAAEALVTMPIRAAELTRASLGHYGDINLLDPDTGQRQVSGPLATYSKKIMSPLKNSTDGVTSFNQSNSTVVALPEGRQELSDGQVKTGISMSLLTVIEKLRERTDQNASDDDILKELQDNAQCQPNSDGSLLGSNVVEYIPDAERPYRCRLCNYSSGNRGYIKQHLRVHRQRQPYQCPICEHIAENSKDLESHMINHCKTRIHQCKQCKESFHYKSQLRNHEREQHCLPNTLSVASNEPRISRDAADGKCAQEGNKPSTQKQYRCDVCDYTSTTYVGVRNHRRVHNSDKPYRCSLCGYVCSHPPSLKSHMWKHASDQNYNYEQVNKAINDAISQSARVLGKSRGKPLLTSSEERTGPTTGSPENLVSSSELTSQLPGEVMDASELEKLNPTGCSSDVSGRSCSLAAPGTEYCVLLFCCCICGFESTSKESLLDHMKEHEGEIVSIILNKDHSTALNAN.

Ser95 is subject to Phosphoserine. 2 C2H2-type zinc fingers span residues 122–144 (YQCS…VKQH) and 152–175 (LMCS…VSEH). The segment covering 165 to 177 (QELEAHVVSEHEN) has biased composition (basic and acidic residues). Residues 165 to 198 (QELEAHVVSEHENSASSQARSSPSGQGATERKSE) form a disordered region. Residues 178 to 192 (SASSQARSSPSGQGA) show a composition bias toward low complexity. A C2H2-type 3 zinc finger spans residues 237 to 259 (YRCLFCSYTCGQQRMLKTHAWKH). Ser415 carries the phosphoserine modification. A disordered region spans residues 455–477 (ELSKGLAPDENAPPGRRRTNSES). 5 consecutive C2H2-type zinc fingers follow at residues 630-652 (YRCR…LRVH), 658-680 (YQCP…MINH), 686-709 (HQCK…REQH), 746-768 (YRCD…RRVH), and 774-796 (YRCS…MWKH). A disordered region spans residues 823–856 (GKSRGKPLLTSSEERTGPTTGSPENLVSSSELTS). Residues 839 to 856 (GPTTGSPENLVSSSELTS) are compositionally biased toward polar residues. The segment at 899 to 921 (FCCCICGFESTSKESLLDHMKEH) adopts a C2H2-type 9 zinc-finger fold.

Belongs to the krueppel C2H2-type zinc-finger protein family.

Its subcellular location is the nucleus. In terms of biological role, may be involved in transcriptional regulation. The polypeptide is Zinc finger protein 507 (Znf507) (Mus musculus (Mouse)).